A 196-amino-acid polypeptide reads, in one-letter code: Charged multivesicular body protein 1a (196 aa).

Methionine 1 is modified (N-acetylmethionine). Residues 5-42 (LFQLKFTAKQLEKLAKKAEKDSKAEQAKVKKALQQKNV) are a coiled coil. Serine 101 bears the Phosphoserine mark. Residues 102-124 (AMDLQKVSAVMDRFEQQVQNLDV) adopt a coiled-coil conformation. Phosphoserine is present on serine 173. The short motif at 185 to 195 (DQLSRRLAALR) is the MIT-interacting motif element.

The protein belongs to the SNF7 family. Probable peripherally associated component of the endosomal sorting required for transport complex III (ESCRT-III). ESCRT-III components are thought to multimerize to form a flat lattice on the perimeter membrane of the endosome. Several assembly forms of ESCRT-III may exist that interact and act sequentially. Self-associates. Interacts with CHMP1B. Interacts with VPS4A. Interacts with VPS4B. Interacts with PHF1. Interacts with IST1. Interacts with MITD1. As to expression, highly expressed in adult heart, kidney and liver. Expressed at lower levels in adult colon, spleen, lung, brain, testis and muscle. Also expressed in myoblasts and embryo fibroblasts.

Its subcellular location is the cytoplasm. The protein resides in the endosome membrane. The protein localises to the nucleus matrix. Functionally, probable peripherally associated component of the endosomal sorting required for transport complex III (ESCRT-III) which is involved in multivesicular bodies (MVBs) formation and sorting of endosomal cargo proteins into MVBs. MVBs contain intraluminal vesicles (ILVs) that are generated by invagination and scission from the limiting membrane of the endosome and mostly are delivered to lysosomes enabling degradation of membrane proteins, such as stimulated growth factor receptors, lysosomal enzymes and lipids. The MVB pathway appears to require the sequential function of ESCRT-O, -I,-II and -III complexes. ESCRT-III proteins mostly dissociate from the invaginating membrane before the ILV is released. The ESCRT machinery also functions in topologically equivalent membrane fission events, such as the terminal stages of cytokinesis. ESCRT-III proteins are believed to mediate the necessary vesicle extrusion and/or membrane fission activities, possibly in conjunction with the AAA ATPase VPS4. Involved in cytokinesis. Involved in recruiting VPS4A and/or VPS4B to the midbody of dividing cells. May also be involved in chromosome condensation. Targets the Polycomb group (PcG) protein BMI1/PCGF4 to regions of condensed chromatin. May play a role in stable cell cycle progression and in PcG gene silencing. This is Charged multivesicular body protein 1a (Chmp1a) from Mus musculus (Mouse).